The chain runs to 640 residues: Large subunit GTPase 1 homolog (640 aa).

The CP-type G domain occupies 165-426 (WRQLWRVIER…LCDCPGLVMP (262 aa)). 213-216 (NKAD) is a GTP binding site. Residues 251-341 (AEERGEDAMD…ESTATSSFYN (91 aa)) form a disordered region. 3 stretches are compositionally biased toward acidic residues: residues 253–270 (ERGEDAMDQEDQSDTEEE), 290–304 (EKDENEQDEEEEGED), and 320–331 (ESGDEDHAEENP). Positions 332–341 (ESTATSSFYN) are enriched in polar residues. Residues 375–382 (GYPNVGKS) and 419–422 (DCPG) each bind GTP. Residues 602-640 (GPVEAGKANTEQQAGKPWKKHGNRNKKEKVRRLNKHLDA) are disordered. Positions 618 to 640 (PWKKHGNRNKKEKVRRLNKHLDA) are enriched in basic residues.

Belongs to the TRAFAC class YlqF/YawG GTPase family. LSG1 subfamily.

The protein resides in the cytoplasm. The protein localises to the endoplasmic reticulum. It is found in the nucleus. It localises to the cajal body. The enzyme catalyses GTP + H2O = GDP + phosphate + H(+). Its function is as follows. Functions as a GTPase. May act by mediating the release of NMD3 from the 60S ribosomal subunit after export into the cytoplasm during the 60S ribosomal subunit maturation. The polypeptide is Large subunit GTPase 1 homolog (Danio rerio (Zebrafish)).